We begin with the raw amino-acid sequence, 191 residues long: Protein Ves (191 aa).

This sequence belongs to the Ves family.

In Escherichia coli (strain 55989 / EAEC), this protein is Protein Ves.